The chain runs to 122 residues: Holo-[acyl-carrier-protein] synthase (122 aa).

Residues D8 and E56 each coordinate Mg(2+).

It belongs to the P-Pant transferase superfamily. AcpS family. It depends on Mg(2+) as a cofactor.

It is found in the cytoplasm. The enzyme catalyses apo-[ACP] + CoA = holo-[ACP] + adenosine 3',5'-bisphosphate + H(+). Functionally, transfers the 4'-phosphopantetheine moiety from coenzyme A to a Ser of acyl-carrier-protein. In Alkaliphilus metalliredigens (strain QYMF), this protein is Holo-[acyl-carrier-protein] synthase.